The chain runs to 600 residues: Tripeptidyl-peptidase 1 (600 aa).

The first 22 residues, 1 to 22 (MNIKFNLIIIILFILFISNVNC), serve as a signal peptide directing secretion. Positions 23 to 220 (KKIKNKKHLT…GGGGKVNGIG (198 aa)) are cleaved as a propeptide — removed in mature form. N-linked (GlcNAc...) asparagine glycans are attached at residues N91, N259, and N266. The 353-residue stretch at 248-600 (YLSPDLIRKE…FDELVKYCLE (353 aa)) folds into the Peptidase S53 domain. Catalysis depends on charge relay system residues E318 and D322. A disulfide bridge links C411 with C570. N-linked (GlcNAc...) asparagine glycans are attached at residues N475 and N483. Catalysis depends on S514, which acts as the Charge relay system. Ca(2+) is bound by residues D559, I560, G579, and D581.

As to quaternary structure, monomer. Requires Ca(2+) as cofactor. In terms of processing, activated by autocatalytic proteolytical processing upon acidification. N-glycosylation is required for processing and activity.

Its subcellular location is the secreted. It catalyses the reaction Release of an N-terminal tripeptide from a polypeptide, but also has endopeptidase activity.. In terms of biological role, serine protease with tripeptidyl-peptidase I activity. This Dictyostelium discoideum (Social amoeba) protein is Tripeptidyl-peptidase 1 (tpp1).